The sequence spans 445 residues: MAQSHSSSINYFGSANKVVYEGKDSTNPLAFKYYNPQEVIGGKTLKEHLRFSIAYWHTFTADGTDVFGAATMQRPWDHYKGMDLAKMRVEAAFEMFEKLDAPFFAFHDRDIAPEGSTLKETNQNLDMIMGMIKDYMRNSGVKLLWNTANMFTNPRFVHGAATSCNADVFAYAAAQVKKGLETAKELGAENYVFWGGREGYETLLNTDLKFELDNLARFMHMAVDYAKEIGYTGQFLIEPKPKEPTTHQYDTDAATTIAFLKQYGLDNHFKLNLEANHATLAGHTFEHELRMARVHGLLGSVDANQGHPLLGWDTDEFPTDLYSTTLAMYEILQNGGLGSGGLNFDAKVRRSSFEPDDLIYAHIAGMDAFARGLKVAHKLIEDRVFEDVIQHRYRSFTEGIGLEIIEGRANFHTLEQYALNHKSIKNESGRQEKLKAILNQYILEV.

Catalysis depends on residues histidine 107 and aspartate 110. 7 residues coordinate Mg(2+): glutamate 238, glutamate 274, histidine 277, aspartate 302, aspartate 313, aspartate 315, and aspartate 345.

Belongs to the xylose isomerase family. In terms of assembly, homotetramer. Mg(2+) serves as cofactor.

It is found in the cytoplasm. The enzyme catalyses alpha-D-xylose = alpha-D-xylulofuranose. The chain is Xylose isomerase (xylA) from Bacillus subtilis (strain 168).